We begin with the raw amino-acid sequence, 418 residues long: Serine--tRNA ligase (418 aa).

L-serine is bound at residue 232–234 (TAE). ATP-binding positions include 263-265 (RRE) and Val279. Glu286 is an L-serine binding site. Position 350–353 (350–353 (EISS)) interacts with ATP. Ser385 contacts L-serine.

The protein belongs to the class-II aminoacyl-tRNA synthetase family. Type-1 seryl-tRNA synthetase subfamily. Homodimer. The tRNA molecule binds across the dimer.

Its subcellular location is the cytoplasm. It carries out the reaction tRNA(Ser) + L-serine + ATP = L-seryl-tRNA(Ser) + AMP + diphosphate + H(+). The enzyme catalyses tRNA(Sec) + L-serine + ATP = L-seryl-tRNA(Sec) + AMP + diphosphate + H(+). The protein operates within aminoacyl-tRNA biosynthesis; selenocysteinyl-tRNA(Sec) biosynthesis; L-seryl-tRNA(Sec) from L-serine and tRNA(Sec): step 1/1. Catalyzes the attachment of serine to tRNA(Ser). Is also able to aminoacylate tRNA(Sec) with serine, to form the misacylated tRNA L-seryl-tRNA(Sec), which will be further converted into selenocysteinyl-tRNA(Sec). The sequence is that of Serine--tRNA ligase from Leptospira biflexa serovar Patoc (strain Patoc 1 / Ames).